Reading from the N-terminus, the 767-residue chain is Mst2 complex subunit nto1 (767 aa).

A PHD-type 1 zinc finger spans residues 194 to 244 (DGRCVICNEAECENSNAIVFCDNCNTSVHQNCYGIPFVPEGQWFCKKCLLA). The segment at 248 to 281 (VICCAFCPDRDGAFCTTLDGRWCHTICAIAIPEI) adopts a C2HC pre-PHD-type zinc-finger fold. The PHD-type 2 zinc-finger motif lies at 305-363 (LVCCICKLRWGTCVQCSDKNCYAAYHITCARRAGFFYKIYSHSASYDSVDMETYCDKHT). A compositionally biased stretch (polar residues) spans 724 to 752 (VTGQSNHALPNSVTKKNGTKQPYTKNSLP). Residues 724 to 767 (VTGQSNHALPNSVTKKNGTKQPYTKNSLPFNERITRSKAKKNYS) form a disordered region.

Component of the mst2 complex composed of at least eaf6, mst2, nto1, pdp3, ptf1, ptf2 and tfg3.

It is found in the cytoplasm. Its subcellular location is the nucleus. Its function is as follows. Component of the mst2 complex which is a highly specific H3 lysine 14 (H3K14) acetyltransferase that functions together with gcn5 to regulate global levels of H3K14 acetylation (H3K14ac), critical for DNA damage checkpoint activation. This Schizosaccharomyces pombe (strain 972 / ATCC 24843) (Fission yeast) protein is Mst2 complex subunit nto1 (nto1).